Here is a 265-residue protein sequence, read N- to C-terminus: Mlc titration factor A (265 aa).

Zn(2+) contacts are provided by His-111, His-148, His-152, and Glu-211.

This sequence belongs to the MtfA family. In terms of assembly, interacts with Mlc. Zn(2+) serves as cofactor.

Its subcellular location is the cytoplasm. In terms of biological role, involved in the modulation of the activity of the glucose-phosphotransferase system (glucose-PTS). Interacts with the transcriptional repressor Mlc, preventing its interaction with DNA and leading to the modulation of expression of genes regulated by Mlc, including ptsG, which encodes the PTS system glucose-specific EIICB component. Shows zinc-dependent metallopeptidase activity. The chain is Mlc titration factor A from Salmonella agona (strain SL483).